Consider the following 195-residue polypeptide: Small ribosomal subunit protein uS4 (195 aa).

In terms of domain architecture, S4 RNA-binding spans 92–152 (SRLDNIVYRL…EKHKHKANKN (61 aa)).

It belongs to the universal ribosomal protein uS4 family. As to quaternary structure, part of the 30S ribosomal subunit. Contacts protein S5. The interaction surface between S4 and S5 is involved in control of translational fidelity.

In terms of biological role, one of the primary rRNA binding proteins, it binds directly to 16S rRNA where it nucleates assembly of the body of the 30S subunit. With S5 and S12 plays an important role in translational accuracy. The protein is Small ribosomal subunit protein uS4 of Karelsulcia muelleri (strain GWSS) (Sulcia muelleri).